A 378-amino-acid polypeptide reads, in one-letter code: Queuine tRNA-ribosyltransferase (378 aa).

Catalysis depends on D89, which acts as the Proton acceptor. Substrate contacts are provided by residues 89 to 93 (DSGGF), D143, Q194, and G221. The tract at residues 252-258 (GVGTPAN) is RNA binding. D271 acts as the Nucleophile in catalysis. Residues C309, C311, C314, and H340 each coordinate Zn(2+).

It belongs to the queuine tRNA-ribosyltransferase family. In terms of assembly, homodimer. Within each dimer, one monomer is responsible for RNA recognition and catalysis, while the other monomer binds to the replacement base PreQ1. Zn(2+) is required as a cofactor.

The catalysed reaction is 7-aminomethyl-7-carbaguanine + guanosine(34) in tRNA = 7-aminomethyl-7-carbaguanosine(34) in tRNA + guanine. It participates in tRNA modification; tRNA-queuosine biosynthesis. Functionally, catalyzes the base-exchange of a guanine (G) residue with the queuine precursor 7-aminomethyl-7-deazaguanine (PreQ1) at position 34 (anticodon wobble position) in tRNAs with GU(N) anticodons (tRNA-Asp, -Asn, -His and -Tyr). Catalysis occurs through a double-displacement mechanism. The nucleophile active site attacks the C1' of nucleotide 34 to detach the guanine base from the RNA, forming a covalent enzyme-RNA intermediate. The proton acceptor active site deprotonates the incoming PreQ1, allowing a nucleophilic attack on the C1' of the ribose to form the product. After dissociation, two additional enzymatic reactions on the tRNA convert PreQ1 to queuine (Q), resulting in the hypermodified nucleoside queuosine (7-(((4,5-cis-dihydroxy-2-cyclopenten-1-yl)amino)methyl)-7-deazaguanosine). The protein is Queuine tRNA-ribosyltransferase of Lachnospira eligens (strain ATCC 27750 / DSM 3376 / VPI C15-48 / C15-B4) (Eubacterium eligens).